The following is a 392-amino-acid chain: Phosphoglycerate kinase (392 aa).

Substrate contacts are provided by residues 21 to 23 (DFN), R36, 59 to 62 (HLGR), R118, and R151. ATP-binding positions include K201, G292, E323, and 349–352 (GGDS).

Belongs to the phosphoglycerate kinase family. In terms of assembly, monomer.

It localises to the cytoplasm. The catalysed reaction is (2R)-3-phosphoglycerate + ATP = (2R)-3-phospho-glyceroyl phosphate + ADP. It functions in the pathway carbohydrate degradation; glycolysis; pyruvate from D-glyceraldehyde 3-phosphate: step 2/5. This Borrelia duttonii (strain Ly) protein is Phosphoglycerate kinase.